Consider the following 533-residue polypeptide: DNA primase large subunit (533 aa).

[4Fe-4S] cluster is bound by residues C298, C377, C393, and C433. Positions 466–492 (RQKRANGSAPPKARIRPDIKGHGDRSM) are disordered. The span at 480–490 (IRPDIKGHGDR) shows a compositional bias: basic and acidic residues.

It belongs to the eukaryotic-type primase large subunit family. In terms of assembly, heterodimer of a catalytic subunit Prim1 and a regulatory subunit Prim2, also known as the DNA primase complex. Component of the alpha DNA polymerase complex (also known as the alpha DNA polymerase-primase complex) consisting of four subunits: the catalytic subunit PolA1, the regulatory subunit PolA2, and the primase complex subunits Prim1 and Prim2 respectively. PolA1 associates with the DNA primase complex before association with PolA2. [4Fe-4S] cluster serves as cofactor. As to expression, expressed in embryos (at protein level).

Functionally, regulatory subunit of the DNA primase complex and component of the DNA polymerase alpha complex (also known as the alpha DNA polymerase-primase complex) which play an essential role in the initiation of DNA synthesis. During the S phase of the cell cycle, the DNA polymerase alpha complex (composed of a catalytic subunit PolA1, an accessory subunit PolA2 and two primase subunits, the catalytic subunit Prim1 and the regulatory subunit Prim2) is recruited to DNA at the replicative forks. The primase subunit of the polymerase alpha complex initiates DNA synthesis by oligomerising short RNA primers on both leading and lagging strands. These primers are initially extended by the polymerase alpha catalytic subunit and subsequently transferred to polymerase delta and polymerase epsilon for processive synthesis on the lagging and leading strand, respectively. In the primase complex, both subunits are necessary for the initial di-nucleotide formation, but the extension of the primer depends only on the catalytic subunit. Stabilizes and modulates the activity of the catalytic subunit. This Drosophila melanogaster (Fruit fly) protein is DNA primase large subunit.